The primary structure comprises 170 residues: Probable inosine/xanthosine triphosphatase (170 aa).

7 to 12 contributes to the substrate binding site; the sequence is TTNPVK. D37 is a Mg(2+) binding site.

It belongs to the YjjX NTPase family. As to quaternary structure, homodimer. It depends on Mg(2+) as a cofactor. Requires Mn(2+) as cofactor.

It catalyses the reaction XTP + H2O = XDP + phosphate + H(+). The catalysed reaction is ITP + H2O = IDP + phosphate + H(+). Its function is as follows. Phosphatase that hydrolyzes non-canonical purine nucleotides such as XTP and ITP to their respective diphosphate derivatives. Probably excludes non-canonical purines from DNA/RNA precursor pool, thus preventing their incorporation into DNA/RNA and avoiding chromosomal lesions. The protein is Probable inosine/xanthosine triphosphatase of Methanopyrus kandleri (strain AV19 / DSM 6324 / JCM 9639 / NBRC 100938).